Consider the following 297-residue polypeptide: 4-hydroxy-tetrahydrodipicolinate synthase (297 aa).

Position 49 (threonine 49) interacts with pyruvate. Tyrosine 137 (proton donor/acceptor) is an active-site residue. The Schiff-base intermediate with substrate role is filled by lysine 166. Isoleucine 208 serves as a coordination point for pyruvate.

Belongs to the DapA family. Homotetramer; dimer of dimers.

The protein localises to the cytoplasm. The catalysed reaction is L-aspartate 4-semialdehyde + pyruvate = (2S,4S)-4-hydroxy-2,3,4,5-tetrahydrodipicolinate + H2O + H(+). It participates in amino-acid biosynthesis; L-lysine biosynthesis via DAP pathway; (S)-tetrahydrodipicolinate from L-aspartate: step 3/4. Functionally, catalyzes the condensation of (S)-aspartate-beta-semialdehyde [(S)-ASA] and pyruvate to 4-hydroxy-tetrahydrodipicolinate (HTPA). This Prosthecochloris aestuarii (strain DSM 271 / SK 413) protein is 4-hydroxy-tetrahydrodipicolinate synthase.